We begin with the raw amino-acid sequence, 397 residues long: Subtilisin-like protease 3 (397 aa).

The N-terminal stretch at M1–A19 is a signal peptide. A propeptide spanning residues R20–A116 is cleaved from the precursor. Residues S35–A116 form the Inhibitor I9 domain. The Peptidase S8 domain maps to T126–Q397. Residues D158 and H189 each act as charge relay system in the active site. The N-linked (GlcNAc...) asparagine glycan is linked to N250. Catalysis depends on S344, which acts as the Charge relay system. The N-linked (GlcNAc...) asparagine glycan is linked to N393.

This sequence belongs to the peptidase S8 family.

It localises to the secreted. Functionally, secreted subtilisin-like serine protease with keratinolytic activity that contributes to pathogenicity. The chain is Subtilisin-like protease 3 (SUB3) from Trichophyton tonsurans (Scalp ringworm fungus).